The following is a 100-amino-acid chain: NADH-quinone oxidoreductase subunit K (100 aa).

3 consecutive transmembrane segments (helical) span residues 4–24, 28–48, and 60–80; these read LQHGLILAAILFVLGLTGLLI, LLFMLISLEVMINAAALAFVV, and VMYILAITLAAAEASIGLALL.

Belongs to the complex I subunit 4L family. In terms of assembly, NDH-1 is composed of 13 different subunits. Subunits NuoA, H, J, K, L, M, N constitute the membrane sector of the complex.

Its subcellular location is the cell inner membrane. It carries out the reaction a quinone + NADH + 5 H(+)(in) = a quinol + NAD(+) + 4 H(+)(out). Functionally, NDH-1 shuttles electrons from NADH, via FMN and iron-sulfur (Fe-S) centers, to quinones in the respiratory chain. The immediate electron acceptor for the enzyme in this species is believed to be ubiquinone. Couples the redox reaction to proton translocation (for every two electrons transferred, four hydrogen ions are translocated across the cytoplasmic membrane), and thus conserves the redox energy in a proton gradient. In Yersinia pseudotuberculosis serotype O:1b (strain IP 31758), this protein is NADH-quinone oxidoreductase subunit K.